Here is a 210-residue protein sequence, read N- to C-terminus: MEMDEDPDNLPAQGQGNIIITKYEQGHRAGAAVDLGHEQVDVRKYTNNLGIVHEMELPRVSALEVKQRRKESKRTNKWQKMLADWTKYRSTKKLSQRVCKVIPLAVRGRALSLLLDIDKIKSQNPGKYKVMKEKGKRSSRIIHCIQLDVSHTLQKHMMFIQRFGVKQQELCDILVAYSAYNPVSIPGQRYSWYLCPYSQAWVSLGGVATS.

The Rab-GAP TBC domain occupies 101 to 210 (VIPLAVRGRA…WVSLGGVATS (110 aa)).

The polypeptide is TBC1 domain family member 28 (TBC1D28) (Homo sapiens (Human)).